The following is a 262-amino-acid chain: Hydroxyethylthiazole kinase (262 aa).

Methionine 50 lines the substrate pocket. Positions 125 and 171 each coordinate ATP. Glycine 198 contributes to the substrate binding site.

This sequence belongs to the Thz kinase family. Requires Mg(2+) as cofactor.

It carries out the reaction 5-(2-hydroxyethyl)-4-methylthiazole + ATP = 4-methyl-5-(2-phosphooxyethyl)-thiazole + ADP + H(+). Its pathway is cofactor biosynthesis; thiamine diphosphate biosynthesis; 4-methyl-5-(2-phosphoethyl)-thiazole from 5-(2-hydroxyethyl)-4-methylthiazole: step 1/1. Catalyzes the phosphorylation of the hydroxyl group of 4-methyl-5-beta-hydroxyethylthiazole (THZ). The protein is Hydroxyethylthiazole kinase of Escherichia coli (strain SMS-3-5 / SECEC).